The sequence spans 364 residues: Geissoschizine synthase (364 aa).

The region spanning 24 to 343 is the Enoyl reductase (ER) domain; it reads GILHPIKFSR…DYLSTAMERI (320 aa). Cys51 provides a ligand contact to Zn(2+). Residue Asn52 participates in NADP(+) binding. 7 residues coordinate Zn(2+): His73, Glu74, Cys104, Cys107, Cys110, Cys118, and Cys168. Leu194, Gly196, Leu197, Ser216, Thr217, Ser218, Lys221, Arg261, Val280, Ala282, Ser304, Thr306, and Arg351 together coordinate NADP(+).

Belongs to the zinc-containing alcohol dehydrogenase family. Class-III subfamily. In terms of assembly, homodimer. Zn(2+) is required as a cofactor.

It catalyses the reaction (19E)-geissoschizine + NADP(+) = 4,21-dehydrogeissoschizine + NADPH. The catalysed reaction is (19E)-geissoschizine + NADPH + H(+) = (16R,19E)-isositsirikine + NADP(+). The enzyme catalyses (19E)-geissoschizine + NADPH + H(+) = (16R,19Z)-isositsirikine + NADP(+). Its pathway is alkaloid biosynthesis. Its function is as follows. An alcohol dehydrogenase involved in the biosynthesis of seco-iridoid and derivatives monoterpenoid indole alkaloids natural products. Catalyzes the production of geissoschizine and its conversion to (16R)-E-isositsirikine and (16R)-Z-isositsirikine. This Alstonia scholaris (Dogbane) protein is Geissoschizine synthase.